A 361-amino-acid polypeptide reads, in one-letter code: G-protein coupled receptor 52 (361 aa).

At 1–44 (MNDSRWTEWRILNTSSGILNVSERHSCPLGFGHYSAVDVCIFET) the chain is on the extracellular side. Asparagine 2, asparagine 13, and asparagine 20 each carry an N-linked (GlcNAc...) asparagine glycan. The helical transmembrane segment at 45 to 65 (IVIVLLTFLIIAGNLTVIFVF) threads the bilayer. At 66-87 (HCAPLLHHYTTSYFIQTMAYAD) the chain is on the cytoplasmic side. The helical transmembrane segment at 88-108 (LFVGVSCLVPTLSLLHYSTGI) threads the bilayer. Residues 109 to 115 (HESLTCQ) are Extracellular-facing. A disulfide bond links cysteine 114 and cysteine 193. Residues 116 to 136 (VFGYIISVLKSVSMACLACIS) form a helical membrane-spanning segment. Residues 137–159 (VDRYLAITKPLSYNQLVTPCRLR) are Cytoplasmic-facing. A helical transmembrane segment spans residues 160-180 (ICIILIWIYSCLIFLPSFFGW). Residues 181 to 200 (GKPGYHGDIFEWCATSWLTS) are Extracellular-facing. Residues 201–221 (AYFTGFIVCLLYAPAALVVCF) form a helical membrane-spanning segment. Residues 222–265 (TYFHIFKICRQHTKEINDRRARFPSHEAAASRDAGHSPDRRYAM) are Cytoplasmic-facing. A helical transmembrane segment spans residues 266–286 (VLFRITSVFYMLWLPYIIYFL). Over 287–296 (LESSRVLDNP) the chain is Extracellular. Residues 297–317 (TLSFLTTWLAISNSFCNCVIY) form a helical membrane-spanning segment. The Cytoplasmic portion of the chain corresponds to 318-361 (SLSNSVFRLGLRRLSETMCTSCMCVKDKEARDPKPRKRANSCSI).

Belongs to the G-protein coupled receptor 1 family.

Its subcellular location is the cell membrane. In terms of biological role, G- protein coupled receptor activated by antipsychotics reserpine leading to an increase in intracellular cAMP and its internalization. May play a role in locomotor activity through modulation of dopamine, NMDA and ADORA2A-induced locomotor activity. These behavioral changes are accompanied by modulation of the dopamine receptor signaling pathway in striatum. Modulates HTT level via cAMP-dependent but PKA independent mechanisms throught activation of RAB39B that translocates HTT to the endoplasmic reticulum, thus avoiding proteasome degradation. In Bos taurus (Bovine), this protein is G-protein coupled receptor 52.